Reading from the N-terminus, the 582-residue chain is BTB/POZ domain and ankyrin repeat-containing protein NPR1 (582 aa).

Over residues 1–18 (MEPPTSHVTNAFSDSDSA) the composition is skewed to polar residues. A disordered region spans residues 1–25 (MEPPTSHVTNAFSDSDSASVEEGGA). Positions 55-140 (ADARIAVPGG…VLDYLYSGRV (86 aa)) constitute a BTB domain. Residues 147-161 (ACLCVDEDCAHVGCH) form a C2HC NPR-type zinc finger. Zn(2+) is bound by residues C150, C155, H157, and C160. ANK repeat units lie at residues 229-258 (RSNL…SLGL), 269-299 (KHVR…NLDD), 301-328 (FALH…DVNH), and 332-361 (RGYT…RPAD). A salicylic acid-binding core (SBC) region spans residues 391 to 526 (PSPKDRLCIE…VLDKIMDDET (136 aa)). R436 contributes to the salicylate binding site. A disordered region spans residues 551 to 582 (QKAFHEDKEENDRSGLSSSSSSTSIGAIRPRR). The segment covering 553-563 (AFHEDKEENDR) has biased composition (basic and acidic residues). Low complexity predominate over residues 564–574 (SGLSSSSSSTS).

This sequence belongs to the plant 'ANKYRIN-BTB/POZ' family. 'NPR1-like' subfamily. As to quaternary structure, oligomer in an uninduced state; disulfide-linked. Forms activated monomer upon changes in cellular redox potential. Interacts with TGA2.1, TGA2.2, TGA2.3, LG2, TGAL1 and TGAL4. Interacts with NRR, RH1, RH2 and RH3.

Its subcellular location is the cytoplasm. The protein resides in the nucleus. The protein localises to the nuclear body. The protein operates within protein modification; protein ubiquitination. Its function is as follows. Salicylic acid (SA)-binding substrate-specific adapter of an E3 ubiquitin-protein ligase complex (CUL3-RBX1-BTB) which mediates the ubiquitination and subsequent proteasomal degradation of target proteins. Transcription cofactor that represses gene expression in the absence of salicylic acid (SA), when attached to negative cis-elements (W-box) with WRKY transcription factors, but stimulates gene expression upon activation by SA, when sumoylated and attached to positive cis-elements (as-1) with TGA transcription factors, thus confering immunity through a series of gene regulations ending in a significant increase in antimicrobial and defense genes expression. Key positive factor of disease resistance. Plays an essential role in benzothiadiazole (BTH)-induced resistance to the blast fungus disease caused by Magnaporthe oryzae. Involved in defense response against the bacterial blight disease caused by Xanthomonas oryzae pv. oryzae (Xoo). Over-expression of NPR1/NH1 confers disease resistance to Xoo, but also enhances herbivore susceptibility. Functions as a transcriptional coactivator of TGA2.1 and LG2 in vitro. Involved in defense response against herbivore. Plants silencing NPR1/NH1 have increased herbivore-induced trypsin proteinase inhibitors and volatiles, which reduces the performance of the striped stem borer (SSB) Chilo suppressalis. The polypeptide is BTB/POZ domain and ankyrin repeat-containing protein NPR1 (Oryza sativa subsp. japonica (Rice)).